The primary structure comprises 635 residues: MSSDIKIKVQSFGRFLSNMVMPNIGAFIAWGIITALFIPTGWLPNETLAKLVGPMITYLLPLLIGYTGGKLVGGERGGVVGAITTMGVIVGADMPMFLGSMIAGPLGGYCIKKFDNWVDGKIKSGFEMLVNNFSAGIIGMILAILAFLGIGPAVEVLSKILAAGVNFMVAHDMLPLASIFVEPAKILFLNNAINHGIFSPLGIQQSHELGKSIFFLIEANPGPGMGVLLAYMFFGRGSAKQSAGGAAIIHFLGGIHEIYFPYVLMNPRLILAVILGGMTGVFTLTILNGGLVSPASPGSILAVLAMTPKGAYFANIAAIIAAMAVSFVVSAVLFKTSKVKERSDIEAATRRMHDMKAESKGASPLAAGNVTNDLSHVRKIIVACDAGMGSSAMGAGVLRKKVQDAGLSNISVTNSAINNLPPDVDLVITHRDLTERAMRQVPQAQHISLTNFLDSGLYTSLTERLVAAQRHIDNEVKVTDSLKDSFDDTNNNLFQLGADNIFLGRKAATKEEANSFAGEQLVKGGYVEPEYVQAMLDREKLTSTYLGESIAVPHGTIEAKDRVLKTGVVFCQYPEGVRFGEEEDEVARLVIGIAARNNEHIQVITSLTNALDDETVIERLAKTTSVDEVLALLNK.

One can recognise a PTS EIIC type-2 domain in the interval 12-342; that stretch reads FGRFLSNMVM…LFKTSKVKER (331 aa). 6 helical membrane-spanning segments follow: residues 24–45, 50–70, 134–155, 165–185, 273–292, and 313–334; these read IGAF…WLPN, KLVG…TGGK, SAGI…PAVE, VNFM…EPAK, VILG…GGLV, and FANI…AVLF. The 96-residue stretch at 378–473 folds into the PTS EIIB type-2 domain; that stretch reads RKIIVACDAG…RLVAAQRHID (96 aa). Cys384 serves as the catalytic Phosphocysteine intermediate; for EIIB activity. Phosphocysteine; by EIIA is present on Cys384. Positions 494 to 635 constitute a PTS EIIA type-2 domain; the sequence is FQLGADNIFL…VDEVLALLNK (142 aa). Catalysis depends on His554, which acts as the Tele-phosphohistidine intermediate; for EIIA activity. Residue His554 is modified to Phosphohistidine; by HPr.

In terms of assembly, homodimer. An intramolecular phosphotransfer takes places between His-554 and Cys-384.

It localises to the cell inner membrane. The enzyme catalyses D-mannitol(out) + N(pros)-phospho-L-histidyl-[protein] = D-mannitol 1-phosphate(in) + L-histidyl-[protein]. In terms of biological role, the phosphoenolpyruvate-dependent sugar phosphotransferase system (sugar PTS), a major carbohydrate active transport system, catalyzes the phosphorylation of incoming sugar substrates concomitantly with their translocation across the cell membrane. This system is involved in D-mannitol transport. The chain is PTS system mannitol-specific EIICBA component from Klebsiella pneumoniae.